A 205-amino-acid polypeptide reads, in one-letter code: Potassium-transporting ATPase KdpC subunit (205 aa).

Residues 9-29 (VFAVLFLFILGFVYPTVTSLI) traverse the membrane as a helical segment.

This sequence belongs to the KdpC family. The system is composed of three essential subunits: KdpA, KdpB and KdpC.

Its subcellular location is the cell membrane. Its function is as follows. Part of the high-affinity ATP-driven potassium transport (or Kdp) system, which catalyzes the hydrolysis of ATP coupled with the electrogenic transport of potassium into the cytoplasm. This subunit acts as a catalytic chaperone that increases the ATP-binding affinity of the ATP-hydrolyzing subunit KdpB by the formation of a transient KdpB/KdpC/ATP ternary complex. The protein is Potassium-transporting ATPase KdpC subunit of Thermoplasma acidophilum (strain ATCC 25905 / DSM 1728 / JCM 9062 / NBRC 15155 / AMRC-C165).